The primary structure comprises 113 residues: Tubulin alpha chain (113 aa).

Glu-52 is a binding site for GTP. Glu-52 contributes to the Mg(2+) binding site.

Belongs to the tubulin family. Dimer of alpha and beta chains. A typical microtubule is a hollow water-filled tube with an outer diameter of 25 nm and an inner diameter of 15 nM. Alpha-beta heterodimers associate head-to-tail to form protofilaments running lengthwise along the microtubule wall with the beta-tubulin subunit facing the microtubule plus end conferring a structural polarity. Microtubules usually have 13 protofilaments but different protofilament numbers can be found in some organisms and specialized cells. Mg(2+) is required as a cofactor.

It is found in the cytoplasm. Its subcellular location is the cytoskeleton. It catalyses the reaction GTP + H2O = GDP + phosphate + H(+). Its function is as follows. Tubulin is the major constituent of microtubules, a cylinder consisting of laterally associated linear protofilaments composed of alpha- and beta-tubulin heterodimers. Microtubules grow by the addition of GTP-tubulin dimers to the microtubule end, where a stabilizing cap forms. Below the cap, tubulin dimers are in GDP-bound state, owing to GTPase activity of alpha-tubulin. This Picea abies (Norway spruce) protein is Tubulin alpha chain (TUBA).